We begin with the raw amino-acid sequence, 313 residues long: Small glutamine-rich tetratricopeptide repeat-containing protein alpha (313 aa).

The tract at residues 66-100 (ATGKEMPQDLRSPARTPPSEEDSAEAERLKTEGNE) is disordered. The residue at position 77 (Ser-77) is a Phosphoserine. Thr-81 carries the phosphothreonine modification. Position 84 is a phosphoserine (Ser-84). A compositionally biased stretch (basic and acidic residues) spans 90–100 (EAERLKTEGNE). 3 TPR repeats span residues 91–124 (AERL…NPAN), 125–158 (AVYF…DPAY), and 159–192 (SKAY…DPDN). Lys-137 carries the N6-acetyllysine modification. Residues 250–269 (MISGGNNPLGTPGTSPSQND) are disordered. Ser-301 bears the Phosphoserine mark. Residue Thr-303 is modified to Phosphothreonine. A Phosphoserine modification is found at Ser-305.

The protein belongs to the SGT family. As to quaternary structure, homodimer. Homooligomer. Interacts with DNAJC5 and DNAJC5B. Interacts (via TPR repeats) with HSP90AA1. Interacts (via Gln-rich region) with SLC2A1. Interacts with HSP90AB1. Interacts (via TPR repeats) with HSPA8/Hsc70; the interaction is direct. Interacts with BAG6 (via ubiquitin-like domain); interaction prevents interaction between BAG6 and RNF126. Forms a multiprotein complex, at least composed of DNAJB12, DNAJB14, HSPA8/Hsc70 and SGTA; interaction with DNAJB14 and HSPA8/Hsc70 is direct. (Microbial infection) Interacts with Vpu and Gag from HIV-1. In terms of assembly, (Microbial infection) Interacts with SARS-CoV accessory protein 7a. Ubiquitous.

It localises to the cytoplasm. The protein localises to the nucleus. Its function is as follows. Co-chaperone that binds misfolded and hydrophobic patches-containing client proteins in the cytosol. Mediates their targeting to the endoplasmic reticulum but also regulates their sorting to the proteasome when targeting fails. Functions in tail-anchored/type II transmembrane proteins membrane insertion constituting with ASNA1 and the BAG6 complex a targeting module. Functions upstream of the BAG6 complex and ASNA1, binding more rapidly the transmembrane domain of newly synthesized proteins. It is also involved in the regulation of the endoplasmic reticulum-associated misfolded protein catabolic process via its interaction with BAG6: collaborates with the BAG6 complex to maintain hydrophobic substrates in non-ubiquitinated states. Competes with RNF126 for interaction with BAG6, preventing the ubiquitination of client proteins associated with the BAG6 complex. Binds directly to HSC70 and HSP70 and regulates their ATPase activity. Functionally, (Microbial infection) In case of infection by polyomavirus, involved in the virus endoplasmic reticulum membrane penetration and infection via interaction with DNAJB12, DNAJB14 and HSPA8/Hsc70. The chain is Small glutamine-rich tetratricopeptide repeat-containing protein alpha (SGTA) from Homo sapiens (Human).